Reading from the N-terminus, the 515-residue chain is Kelch repeat protein M-T8 (515 aa).

The BTB domain maps to 16–82 (CDVEIVAEGK…MYTESIELHK (67 aa)). Kelch repeat units lie at residues 280-326 (VLYF…AIGG), 328-374 (IYII…CYKN), 376-423 (IWVL…VYKE), 424-471 (RLYC…VYND), and 473-512 (LYVF…YATY).

Belongs to the poxviruses Kelch family.

The chain is Kelch repeat protein M-T8 from Oryctolagus cuniculus (Rabbit).